The chain runs to 140 residues: Fluoride-specific ion channel FluC 1 (140 aa).

Transmembrane regions (helical) follow at residues 45–65 (IPSL…IGFL), 82–102 (FLGA…TQTI), and 106–126 (LFYG…GVFI). 2 residues coordinate Na(+): Gly-89 and Thr-92.

It belongs to the fluoride channel Fluc/FEX (TC 1.A.43) family.

The protein resides in the cell membrane. It catalyses the reaction fluoride(in) = fluoride(out). With respect to regulation, na(+) is not transported, but it plays an essential structural role and its presence is essential for fluoride channel function. Fluoride-specific ion channel. Important for reducing fluoride concentration in the cell, thus reducing its toxicity. The chain is Fluoride-specific ion channel FluC 1 from Methanospirillum hungatei JF-1 (strain ATCC 27890 / DSM 864 / NBRC 100397 / JF-1).